Consider the following 432-residue polypeptide: MTENEKSRSLPAERNPLYKDDTLDHTPLIPKCRAQVIEFPDGPATFVRLKCTNPESKVPHFLMRMAKDSSISATSMFRSAFPKATQEEEDLEMRWIRDNLNPIEDKRVAGLWVPPADALALAKDYSMTPFINALLEASSTPSTYATPSRPTAQKSETSEGEPESSTSATTTSVARRTRQRLAEHLENSKKTILQHDNKEEDKEIHSEENETKDEIKSEKKEPEIKKQEGGSSTEKVGQPSSSDDKAKGSTSKDQPSEEEEKTSDIQDRKIKTPIKPSLLGKIRSSVNKGMTDVASQVNRGMTDVASQVNKGVNGVASQVNKGMNGVANQVNKGVTGVASQVRKPVGKLEKKFENLEKSIGDTLKSSIRSSPKSKKRSREDFEENEDYNAMVPVKRSRITKLESEVYYEKRKVRALGGIAIGLGVGAILPFLF.

The tract at residues 1–21 (MTENEKSRSLPAERNPLYKDD) is disordered. The HTH APSES-type domain maps to 38 to 147 (EFPDGPATFV…SSTPSTYATP (110 aa)). The segment at residues 73 to 94 (ATSMFRSAFPKATQEEEDLEMR) is a DNA-binding region (H-T-H motif). Low complexity-rich tracts occupy residues 139-152 (STPSTYATPSRPTA) and 163-172 (ESSTSATTTS). Disordered stretches follow at residues 139–283 (STPS…GKIR) and 364–384 (KSSIRSSPKSKKRSREDFEEN). Over residues 180–228 (RLAEHLENSKKTILQHDNKEEDKEIHSEENETKDEIKSEKKEPEIKKQE) the composition is skewed to basic and acidic residues. The span at 229-241 (GGSSTEKVGQPSS) shows a compositional bias: polar residues.

As to quaternary structure, interacts with rap1.

Its subcellular location is the cytoplasm. It localises to the nucleus. It is found in the nucleus inner membrane. In terms of biological role, connects telomeres to the nuclear envelop (NE) during both vegetative growth and meiosis. This connection ensures clustering of telomeres to the spindle pole body (SPB) when cells enter meiotic prophase. The sequence is that of Bouquet formation protein 4 (bqt4) from Schizosaccharomyces pombe (strain 972 / ATCC 24843) (Fission yeast).